The chain runs to 421 residues: MDALTSSLVRSPIVPSRTSDNGSGSMFLTASGPGFTRSGSSRLQLRLRQNASARSSRSLQSLTTTAKTRRSFVVRASSASNDASSGSSPKPIAPLQLQSPAGQFLSQILVSHPHLVPAAVEQQLEQLQTDRDSQGQNKDSASVPGTDIVLYRRIAELKENERRRTLEEILYALVVQKFMEANVSLVPSVSPSSDPSGRVDTWPTKVEKLERLHSPEMYEMIHNHLALILGSRMGDLNSVAQISKLRVGQVYAASVMYGYFLKRVDQRFQLEKTMKILPGGSDESKTSVEQAEGTATYQAAVSSHPEVGAFAGGVSAKGFGSEIKPSRLRSYVMSFDAETLQRYATIRSREAVGIIEKHTEALFGKPEIVITPEGTVDSSKDEQIKISFGGMKRLVLEAVTFGSFLWDVESHVDARYHFVLN.

Disordered regions lie at residues 1–40 (MDAL…RSGS) and 74–95 (VRAS…IAPL). A chloroplast-targeting transit peptide spans 1–75 (MDALTSSLVR…AKTRRSFVVR (75 aa)). A compositionally biased stretch (polar residues) spans 16–28 (SRTSDNGSGSMFL). The segment covering 74–88 (VRASSASNDASSGSS) has biased composition (low complexity).

The protein localises to the plastid. Its subcellular location is the chloroplast. The sequence is that of UV-B-induced protein At3g17800, chloroplastic from Arabidopsis thaliana (Mouse-ear cress).